A 474-amino-acid chain; its full sequence is tRNA-2-methylthio-N(6)-dimethylallyladenosine synthase (474 aa).

The MTTase N-terminal domain occupies Lys-3 to Gly-120. Cys-12, Cys-49, Cys-83, Cys-157, Cys-161, and Cys-164 together coordinate [4Fe-4S] cluster. A Radical SAM core domain is found at Arg-143–Arg-378. The region spanning Arg-378–Arg-441 is the TRAM domain.

Belongs to the methylthiotransferase family. MiaB subfamily. As to quaternary structure, monomer. Requires [4Fe-4S] cluster as cofactor.

It localises to the cytoplasm. The enzyme catalyses N(6)-dimethylallyladenosine(37) in tRNA + (sulfur carrier)-SH + AH2 + 2 S-adenosyl-L-methionine = 2-methylsulfanyl-N(6)-dimethylallyladenosine(37) in tRNA + (sulfur carrier)-H + 5'-deoxyadenosine + L-methionine + A + S-adenosyl-L-homocysteine + 2 H(+). In terms of biological role, catalyzes the methylthiolation of N6-(dimethylallyl)adenosine (i(6)A), leading to the formation of 2-methylthio-N6-(dimethylallyl)adenosine (ms(2)i(6)A) at position 37 in tRNAs that read codons beginning with uridine. This is tRNA-2-methylthio-N(6)-dimethylallyladenosine synthase from Enterobacter sp. (strain 638).